We begin with the raw amino-acid sequence, 210 residues long: Somatotropin (210 aa).

The N-terminal stretch at 1–22 (MGQVFLLMPVLLVSCFLSQGAA) is a signal peptide. Residue H38 participates in Zn(2+) binding. A disulfide bond links C71 and C183. Residue E192 coordinates Zn(2+). A disulfide bridge connects residues C200 and C208.

This sequence belongs to the somatotropin/prolactin family.

The protein localises to the secreted. Growth hormone plays an important role in growth control and is involved in the regulation of several anabolic processes. Implicated as an osmoregulatory substance important for seawater adaptation. In Salmo salar (Atlantic salmon), this protein is Somatotropin (gh).